Reading from the N-terminus, the 100-residue chain is Small ribosomal subunit protein uS14c (100 aa).

Belongs to the universal ribosomal protein uS14 family. In terms of assembly, part of the 30S ribosomal subunit.

The protein resides in the plastid. In terms of biological role, binds 16S rRNA, required for the assembly of 30S particles. This is Small ribosomal subunit protein uS14c from Cuscuta exaltata (Tall dodder).